The sequence spans 189 residues: Protein OPG107 (189 aa).

At 1–28 (MDKTTLSVNACNLEYVREKAIVGVQAAK) the chain is on the intravirion side. Residues 29 to 49 (TSTLIFFVIILAISALLLWFQ) traverse the membrane as a helical; Signal-anchor for type III membrane protein segment. At 50–189 (TSDNPVFNEL…HWCSDFSNME (140 aa)) the chain is on the virion surface side.

This sequence belongs to the orthopoxvirus OPG107 family. Part of a stable entry-fusion complex (EFC) which is at least composed of proteins OPG143, OPG147, OPG155, OPG86, OPG94, OPG107, OPG104, and OPG099. Formation of the viral membrane is necessary for the assembly of the complex. Contains two intramolecular disulfide bonds. They are created by the viral disulfide bond formation pathway, a poxvirus-specific pathway that operates on the cytoplasmic side of the MV membranes.

It localises to the virion membrane. The protein localises to the host endoplasmic reticulum membrane. In terms of biological role, envelope protein part of the entry-fusion complex responsible for the virus membrane fusion with host cell membrane during virus entry. Also plays a role in cell-cell fusion (syncytium formation). The polypeptide is Protein OPG107 (OPG107) (Bos taurus (Bovine)).